Here is a 190-residue protein sequence, read N- to C-terminus: Peptidyl-prolyl cis-trans isomerase A (190 aa).

The N-terminal stretch at methionine 1–alanine 24 is a signal peptide. Residues glycine 27–valine 188 enclose the PPIase cyclophilin-type domain.

This sequence belongs to the cyclophilin-type PPIase family.

Its subcellular location is the periplasm. The enzyme catalyses [protein]-peptidylproline (omega=180) = [protein]-peptidylproline (omega=0). Functionally, PPIases accelerate the folding of proteins. It catalyzes the cis-trans isomerization of proline imidic peptide bonds in oligopeptides. The chain is Peptidyl-prolyl cis-trans isomerase A (ppiA) from Escherichia coli O157:H7.